A 680-amino-acid polypeptide reads, in one-letter code: 1-deoxy-D-xylulose-5-phosphate synthase (680 aa).

Residues 1-17 (MQQSPHSPQSQSLSASA) are compositionally biased toward low complexity. The tract at residues 1 to 20 (MQQSPHSPQSQSLSASAVDS) is disordered. Residues His113 and 154 to 156 (GHS) contribute to the thiamine diphosphate site. Asp185 serves as a coordination point for Mg(2+). Residues 186–187 (GA), Asn214, Phe323, and Glu408 contribute to the thiamine diphosphate site. Residue Asn214 participates in Mg(2+) binding.

It belongs to the transketolase family. DXPS subfamily. As to quaternary structure, homodimer. Mg(2+) is required as a cofactor. The cofactor is thiamine diphosphate.

The enzyme catalyses D-glyceraldehyde 3-phosphate + pyruvate + H(+) = 1-deoxy-D-xylulose 5-phosphate + CO2. It participates in metabolic intermediate biosynthesis; 1-deoxy-D-xylulose 5-phosphate biosynthesis; 1-deoxy-D-xylulose 5-phosphate from D-glyceraldehyde 3-phosphate and pyruvate: step 1/1. Catalyzes the acyloin condensation reaction between C atoms 2 and 3 of pyruvate and glyceraldehyde 3-phosphate to yield 1-deoxy-D-xylulose-5-phosphate (DXP). In Psychrobacter cryohalolentis (strain ATCC BAA-1226 / DSM 17306 / VKM B-2378 / K5), this protein is 1-deoxy-D-xylulose-5-phosphate synthase.